We begin with the raw amino-acid sequence, 342 residues long: S-adenosylmethionine:tRNA ribosyltransferase-isomerase (342 aa).

This sequence belongs to the QueA family. In terms of assembly, monomer.

It is found in the cytoplasm. The catalysed reaction is 7-aminomethyl-7-carbaguanosine(34) in tRNA + S-adenosyl-L-methionine = epoxyqueuosine(34) in tRNA + adenine + L-methionine + 2 H(+). It functions in the pathway tRNA modification; tRNA-queuosine biosynthesis. Its function is as follows. Transfers and isomerizes the ribose moiety from AdoMet to the 7-aminomethyl group of 7-deazaguanine (preQ1-tRNA) to give epoxyqueuosine (oQ-tRNA). The sequence is that of S-adenosylmethionine:tRNA ribosyltransferase-isomerase from Streptococcus pyogenes serotype M6 (strain ATCC BAA-946 / MGAS10394).